Consider the following 271-residue polypeptide: NADPH-dependent 7-cyano-7-deazaguanine reductase (271 aa).

81–83 contributes to the substrate binding site; that stretch reads IES. 83–84 serves as a coordination point for NADPH; it reads SK. The active-site Thioimide intermediate is cysteine 177. Aspartate 184 serves as the catalytic Proton donor. Position 216–217 (216–217) interacts with substrate; the sequence is HE. An NADPH-binding site is contributed by 245-246; sequence RG.

This sequence belongs to the GTP cyclohydrolase I family. QueF type 2 subfamily. Homodimer.

Its subcellular location is the cytoplasm. The enzyme catalyses 7-aminomethyl-7-carbaguanine + 2 NADP(+) = 7-cyano-7-deazaguanine + 2 NADPH + 3 H(+). Its pathway is tRNA modification; tRNA-queuosine biosynthesis. Functionally, catalyzes the NADPH-dependent reduction of 7-cyano-7-deazaguanine (preQ0) to 7-aminomethyl-7-deazaguanine (preQ1). The chain is NADPH-dependent 7-cyano-7-deazaguanine reductase from Xanthomonas campestris pv. campestris (strain 8004).